The sequence spans 364 residues: Aminomethyltransferase (364 aa).

It belongs to the GcvT family. In terms of assembly, the glycine cleavage system is composed of four proteins: P, T, L and H.

It catalyses the reaction N(6)-[(R)-S(8)-aminomethyldihydrolipoyl]-L-lysyl-[protein] + (6S)-5,6,7,8-tetrahydrofolate = N(6)-[(R)-dihydrolipoyl]-L-lysyl-[protein] + (6R)-5,10-methylene-5,6,7,8-tetrahydrofolate + NH4(+). Functionally, the glycine cleavage system catalyzes the degradation of glycine. This chain is Aminomethyltransferase, found in Salmonella paratyphi A (strain AKU_12601).